The chain runs to 341 residues: tRNA N6-adenosine threonylcarbamoyltransferase (341 aa).

His111 and His115 together coordinate Fe cation. Residues 134-138 (LVSGG), Asp167, Gly180, and Asn276 each bind substrate. Asp304 contributes to the Fe cation binding site.

The protein belongs to the KAE1 / TsaD family. Fe(2+) serves as cofactor.

It is found in the cytoplasm. It carries out the reaction L-threonylcarbamoyladenylate + adenosine(37) in tRNA = N(6)-L-threonylcarbamoyladenosine(37) in tRNA + AMP + H(+). Required for the formation of a threonylcarbamoyl group on adenosine at position 37 (t(6)A37) in tRNAs that read codons beginning with adenine. Is involved in the transfer of the threonylcarbamoyl moiety of threonylcarbamoyl-AMP (TC-AMP) to the N6 group of A37, together with TsaE and TsaB. TsaD likely plays a direct catalytic role in this reaction. The sequence is that of tRNA N6-adenosine threonylcarbamoyltransferase from Alteromonas mediterranea (strain DSM 17117 / CIP 110805 / LMG 28347 / Deep ecotype).